The sequence spans 212 residues: MTSQRTRERLIQRLCEEGVSNPKVLDAIRRTPRHLFVDEALAHRAYEDTALPIGHNQTISQPFMVAHMSELLLEAGPLDKVLEIGTGSGYQTAILAQLVERVFSVERIKVLQDRAKERLVELNLRNVVFRWGDGCDGWQALAPYNGIIVTAVAPEVPQALLDQLAPGGRMVIPVGPAGEVQQLMLIVREEQGFSRRVLGAVRFVPLLNGPVA.

Ser60 is an active-site residue.

It belongs to the methyltransferase superfamily. L-isoaspartyl/D-aspartyl protein methyltransferase family.

The protein resides in the cytoplasm. It catalyses the reaction [protein]-L-isoaspartate + S-adenosyl-L-methionine = [protein]-L-isoaspartate alpha-methyl ester + S-adenosyl-L-homocysteine. Catalyzes the methyl esterification of L-isoaspartyl residues in peptides and proteins that result from spontaneous decomposition of normal L-aspartyl and L-asparaginyl residues. It plays a role in the repair and/or degradation of damaged proteins. The protein is Protein-L-isoaspartate O-methyltransferase of Pseudomonas putida (strain W619).